The sequence spans 685 residues: Polyphosphate kinase (685 aa).

Asparagine 45 serves as a coordination point for ATP. Mg(2+)-binding residues include arginine 375 and arginine 405. Histidine 435 acts as the Phosphohistidine intermediate in catalysis. Residues tyrosine 468, arginine 564, and histidine 592 each coordinate ATP.

Belongs to the polyphosphate kinase 1 (PPK1) family. Mg(2+) is required as a cofactor. In terms of processing, an intermediate of this reaction is the autophosphorylated ppk in which a phosphate is covalently linked to a histidine residue through a N-P bond.

The enzyme catalyses [phosphate](n) + ATP = [phosphate](n+1) + ADP. Its function is as follows. Catalyzes the reversible transfer of the terminal phosphate of ATP to form a long-chain polyphosphate (polyP). This chain is Polyphosphate kinase, found in Neisseria meningitidis serogroup C (strain 053442).